The chain runs to 120 residues: Ribonuclease P protein component (120 aa).

This sequence belongs to the RnpA family. In terms of assembly, consists of a catalytic RNA component (M1 or rnpB) and a protein subunit.

It carries out the reaction Endonucleolytic cleavage of RNA, removing 5'-extranucleotides from tRNA precursor.. RNaseP catalyzes the removal of the 5'-leader sequence from pre-tRNA to produce the mature 5'-terminus. It can also cleave other RNA substrates such as 4.5S RNA. The protein component plays an auxiliary but essential role in vivo by binding to the 5'-leader sequence and broadening the substrate specificity of the ribozyme. The sequence is that of Ribonuclease P protein component from Acidothermus cellulolyticus (strain ATCC 43068 / DSM 8971 / 11B).